The sequence spans 491 residues: F-box protein At3g59000 (491 aa).

Residues 1 to 49 (MDRVGSLPDELLSHILSFLTTKEAALTSLLSKRWRYLIAFVPNLAFDDI) form the F-box domain.

In terms of assembly, part of a SCF (ASK-cullin-F-box) protein ligase complex. Interacts with ASK4.

It is found in the nucleus. It participates in protein modification; protein ubiquitination. Its function is as follows. Component of SCF(ASK-cullin-F-box) E3 ubiquitin ligase complexes, which may mediate the ubiquitination and subsequent proteasomal degradation of target proteins. This Arabidopsis thaliana (Mouse-ear cress) protein is F-box protein At3g59000.